Reading from the N-terminus, the 119-residue chain is Large ribosomal subunit protein bL20 (119 aa).

Belongs to the bacterial ribosomal protein bL20 family.

Binds directly to 23S ribosomal RNA and is necessary for the in vitro assembly process of the 50S ribosomal subunit. It is not involved in the protein synthesizing functions of that subunit. This is Large ribosomal subunit protein bL20 from Gluconacetobacter diazotrophicus (strain ATCC 49037 / DSM 5601 / CCUG 37298 / CIP 103539 / LMG 7603 / PAl5).